A 282-amino-acid polypeptide reads, in one-letter code: Bifunctional protein FolD (282 aa).

NADP(+)-binding positions include 165–167 (GAS) and isoleucine 231.

Belongs to the tetrahydrofolate dehydrogenase/cyclohydrolase family. As to quaternary structure, homodimer.

The catalysed reaction is (6R)-5,10-methylene-5,6,7,8-tetrahydrofolate + NADP(+) = (6R)-5,10-methenyltetrahydrofolate + NADPH. It carries out the reaction (6R)-5,10-methenyltetrahydrofolate + H2O = (6R)-10-formyltetrahydrofolate + H(+). Its pathway is one-carbon metabolism; tetrahydrofolate interconversion. Functionally, catalyzes the oxidation of 5,10-methylenetetrahydrofolate to 5,10-methenyltetrahydrofolate and then the hydrolysis of 5,10-methenyltetrahydrofolate to 10-formyltetrahydrofolate. The polypeptide is Bifunctional protein FolD (Francisella philomiragia subsp. philomiragia (strain ATCC 25017 / CCUG 19701 / FSC 153 / O#319-036)).